A 484-amino-acid chain; its full sequence is Zinc metalloproteinase-disintegrin BlatH1 (484 aa).

The first 20 residues, Met-1–Ser-20, serve as a signal peptide directing secretion. Positions Ile-21–Pro-190 are excised as a propeptide. A Pyrrolidone carboxylic acid (Glu) modification is found at Glu-191. One can recognise a Peptidase M12B domain in the interval Lys-199–Pro-395. Residue Glu-202 participates in Ca(2+) binding. Asn-259 carries an N-linked (GlcNAc...) asparagine glycan. A Ca(2+)-binding site is contributed by Asp-286. N-linked (GlcNAc...) asparagine glycosylation occurs at Asn-297. 3 disulfide bridges follow: Cys-310-Cys-390, Cys-350-Cys-374, and Cys-352-Cys-357. Zn(2+) is bound at residue His-335. Residue Glu-336 is part of the active site. His-339 and His-345 together coordinate Zn(2+). A glycan (N-linked (GlcNAc...) asparagine) is linked at Asn-373. 7 residues coordinate Ca(2+): Cys-390, Asn-393, Val-405, Asn-408, Glu-412, Glu-415, and Asp-418. Residues Pro-403–Gly-484 form the Disintegrin domain. Intrachain disulfides connect Cys-406-Cys-425, Cys-417-Cys-435, Cys-419-Cys-430, Cys-429-Cys-452, Cys-443-Cys-449, Cys-448-Cys-473, and Cys-461-Cys-480. The TDN-tripeptide signature appears at Thr-465–Asn-467.

It belongs to the venom metalloproteinase (M12B) family. P-II subfamily. P-IIc sub-subfamily. In terms of assembly, homodimer. Requires Zn(2+) as cofactor. In terms of processing, the N-terminus is blocked. Expressed by the venom gland.

It is found in the secreted. Its activity is regulated as follows. Platelet aggregation in inhibited by the metalloproteinase inhibitors EDTA and Batimastat. The hemorrhagic activity is not inhibited by the plasma proteinase inhibitor alpha2-macroglobulin, although the SVMP is able to cleave this plasma inhibitor, generating a 90 kDa product. Functionally, snake venom zinc metalloprotease-disintegrin that hydrolyzes azocasein, gelatin and fibrinogen (Aalpha and Bbeta chains and partially gamma-chain), and exerts a potent local and systemic hemorrhagic activity in mice. It inhibits ADP- and collagen-induced human platelet aggregation (IC(50) = 0.3 uM and 0.7 uM for ADP and collagen, respectively). This inhibition is dependent of protease activity, and probably occurs through the degradation of an unknown platelet receptor. This Bothriechis lateralis (Side-striped palm pitviper) protein is Zinc metalloproteinase-disintegrin BlatH1.